We begin with the raw amino-acid sequence, 215 residues long: Interleukin-12 subunit alpha (215 aa).

The first 22 residues, Met1 to Ala22, serve as a signal peptide directing secretion. 3 cysteine pairs are disulfide-bonded: Cys33–Cys106, Cys60–Cys192, and Cys81–Cys119. Residues Asn35, Asn89, and Asn167 are each glycosylated (N-linked (GlcNAc...) asparagine).

Belongs to the IL-6 superfamily. As to quaternary structure, heterodimer with IL12B; disulfide-linked. This heterodimer is known as interleukin IL-12. Heterodimer with EBI3/IL27B; not disulfide-linked. This heterodimer is known as interleukin IL-35. Interacts with NBR1; this interaction promotes IL-12 secretion.

It is found in the secreted. In terms of biological role, heterodimerizes with IL12B to form the IL-12 cytokine or with EBI3/IL27B to form the IL-35 cytokine. IL-12 is primarily produced by professional antigen-presenting cells (APCs) such as B-cells and dendritic cells (DCs) as well as macrophages and granulocytes and regulates T-cell and natural killer-cell responses, induces the production of interferon-gamma (IFN-gamma), favors the differentiation of T-helper 1 (Th1) cells and is an important link between innate resistance and adaptive immunity. Mechanistically, exerts its biological effects through a receptor composed of IL12R1 and IL12R2 subunits. Binding to the receptor results in the rapid tyrosine phosphorylation of a number of cellular substrates including the JAK family kinases TYK2 and JAK2. In turn, recruited STAT4 gets phosphorylated and translocates to the nucleus where it regulates cytokine/growth factor responsive genes. As part of IL-35, plays essential roles in maintaining the immune homeostasis of the liver microenvironment and also functions as an immune-suppressive cytokine. Mediates biological events through unconventional receptors composed of IL12RB2 and gp130/IL6ST heterodimers or homodimers. Signaling requires the transcription factors STAT1 and STAT4, which form a unique heterodimer that binds to distinct DNA sites. The polypeptide is Interleukin-12 subunit alpha (Il12a) (Rattus norvegicus (Rat)).